We begin with the raw amino-acid sequence, 290 residues long: Pyridoxal 5'-phosphate synthase subunit PdxS (290 aa).

Asp22 is a D-ribose 5-phosphate binding site. The Schiff-base intermediate with D-ribose 5-phosphate role is filled by Lys79. Gly151 serves as a coordination point for D-ribose 5-phosphate. D-glyceraldehyde 3-phosphate is bound at residue Arg163. D-ribose 5-phosphate-binding positions include Gly212 and 233–234; that span reads GS.

Belongs to the PdxS/SNZ family. In terms of assembly, in the presence of PdxT, forms a dodecamer of heterodimers.

It catalyses the reaction aldehydo-D-ribose 5-phosphate + D-glyceraldehyde 3-phosphate + L-glutamine = pyridoxal 5'-phosphate + L-glutamate + phosphate + 3 H2O + H(+). It functions in the pathway cofactor biosynthesis; pyridoxal 5'-phosphate biosynthesis. Functionally, catalyzes the formation of pyridoxal 5'-phosphate from ribose 5-phosphate (RBP), glyceraldehyde 3-phosphate (G3P) and ammonia. The ammonia is provided by the PdxT subunit. Can also use ribulose 5-phosphate and dihydroxyacetone phosphate as substrates, resulting from enzyme-catalyzed isomerization of RBP and G3P, respectively. The chain is Pyridoxal 5'-phosphate synthase subunit PdxS from Clostridium botulinum (strain Langeland / NCTC 10281 / Type F).